The following is a 154-amino-acid chain: Large ribosomal subunit protein uL30 (154 aa).

This sequence belongs to the universal ribosomal protein uL30 family. As to quaternary structure, part of the 50S ribosomal subunit.

The polypeptide is Large ribosomal subunit protein uL30 (Methanococcus maripaludis (strain DSM 14266 / JCM 13030 / NBRC 101832 / S2 / LL)).